We begin with the raw amino-acid sequence, 206 residues long: Sec-independent protein translocase protein TatB (206 aa).

A helical membrane pass occupies residues methionine 1–glycine 21. Residues glutamate 104 to alanine 206 are disordered. Residues proline 110 to proline 124 are compositionally biased toward low complexity. A compositionally biased stretch (pro residues) spans glutamate 125–glutamate 138. 2 stretches are compositionally biased toward low complexity: residues proline 139 to proline 151 and alanine 187 to proline 196.

The protein belongs to the TatB family. As to quaternary structure, the Tat system comprises two distinct complexes: a TatABC complex, containing multiple copies of TatA, TatB and TatC subunits, and a separate TatA complex, containing only TatA subunits. Substrates initially bind to the TatABC complex, which probably triggers association of the separate TatA complex to form the active translocon.

It is found in the cell inner membrane. In terms of biological role, part of the twin-arginine translocation (Tat) system that transports large folded proteins containing a characteristic twin-arginine motif in their signal peptide across membranes. Together with TatC, TatB is part of a receptor directly interacting with Tat signal peptides. TatB may form an oligomeric binding site that transiently accommodates folded Tat precursor proteins before their translocation. In Rhizobium etli (strain ATCC 51251 / DSM 11541 / JCM 21823 / NBRC 15573 / CFN 42), this protein is Sec-independent protein translocase protein TatB.